The sequence spans 325 residues: Chain length determinant protein (325 aa).

Residues 1-31 (MRVENNNVSGQNHDPEQIDLIDLLVQLWRGK) lie on the Cytoplasmic side of the membrane. A helical transmembrane segment spans residues 32–52 (MTIIISVIVAIALAIGYLAVA). Topologically, residues 53–294 (KEKWTSTAII…LPIRRDSPKK (242 aa)) are periplasmic. A helical transmembrane segment spans residues 295–315 (AITLILAVLLGGMVGAGIVLG). The Cytoplasmic portion of the chain corresponds to 316–325 (RNALRNYNAK).

The protein belongs to the WzzB/Cld/Rol family.

It localises to the cell inner membrane. It participates in bacterial outer membrane biogenesis; lipopolysaccharide biosynthesis. Confers a modal distribution of chain length on the O-antigen component of lipopolysaccharide (LPS). Gives rise to a reduced number of short chain molecules and increases in numbers of longer molecules. The polypeptide is Chain length determinant protein (wzzB) (Shigella flexneri).